The sequence spans 131 residues: Squamosa promoter-binding-like protein 3 (131 aa).

The span at 1 to 17 shows a compositional bias: basic and acidic residues; it reads MSMRRSKAEGKRSLREL. The segment at 1–54 is disordered; the sequence is MSMRRSKAEGKRSLRELSEEEEEEEETEDEDTFEEEEALEKKQKGKATSSSGVC. The span at 18 to 38 shows a compositional bias: acidic residues; sequence SEEEEEEEETEDEDTFEEEEA. Residues 45 to 129 form a sufficient and necessary for DNA binding region; the sequence is GKATSSSGVC…GHNERRRKST (85 aa). An SBP-type zinc finger spans residues 51–128; that stretch reads SGVCQVESCT…AGHNERRRKS (78 aa). Zn(2+) is bound by residues Cys54, Cys59, Cys76, His79, Cys95, Cys98, His102, and Cys114. The Bipartite nuclear localization signal motif lies at 111 to 127; it reads KRSCRRRLAGHNERRRK.

It depends on Zn(2+) as a cofactor. Expressed in vegetative and inflorescence apical meristems, floral meristems, leaf and flower organ primordia, inflorescence stem tissue and to lower extent in roots.

It is found in the nucleus. It localises to the cytoplasm. In terms of biological role, trans-acting factor that binds specifically to the consensus nucleotide sequence 5'-TNCGTACAA-3' of AP1 promoter. Binds specifically to the 5'-GTAC-3' core sequence. Promotes both vegetative phase change and flowering. Regulates phase-specific patterns of leaf epidermal differentiation and flowering time, but does not seem to affect leaf shape. The sequence is that of Squamosa promoter-binding-like protein 3 (SPL3) from Arabidopsis thaliana (Mouse-ear cress).